The primary structure comprises 188 residues: Pterocarpan synthase 1 (188 aa).

Residues 1-23 (MAKSTTFFISLTLPFLLLSVVTA) form the signal peptide. N-linked (GlcNAc...) asparagine glycosylation is present at Asn127.

This sequence belongs to the plant dirigent protein family. In terms of assembly, homodimer.

It localises to the secreted. It is found in the extracellular space. The protein localises to the apoplast. The enzyme catalyses a (4R)-4,2'-dihydroxyisoflavan = a pterocarpan + H2O.. The catalysed reaction is (3R,4R)-7,2'-dihydroxy-4'-methoxyisoflavanol = (-)-medicarpin + H2O. It catalyses the reaction (3S,4R)-7,2'-dihydroxy-4'-methoxyisoflavanol = (+)-medicarpin + H2O. It carries out the reaction (3R,4R)-3-(6-hydroxy-1,3-benzodioxol-5-yl)-3,4-dihydro-2H-chromene-4,7-diol = (-)-maackiain + H2O. The enzyme catalyses (3R,4R)-7,2',4'-trihydroxyisoflavanol = (6aR,11aR)-3,9-dihydroxypterocarpan + H2O. In terms of biological role, involved in pterocarpan phytoalexin biosynthesis. Catalyzes the last step in the biosynthesis of the phytoalexin medicarpin, and thereby contributes to plant defense reactions. Dirigent proteins impart stereoselectivity on the phenoxy radical-coupling reaction, yielding optically active lignans from two molecules of coniferyl alcohol in the biosynthesis of lignans, flavonolignans, and alkaloids and thus plays a central role in plant secondary metabolism. In Glycyrrhiza echinata (Licorice), this protein is Pterocarpan synthase 1.